We begin with the raw amino-acid sequence, 332 residues long: Biotin synthase (332 aa).

Residues 51 to 278 (RTIQLSTLMS…KSYVRLSAGR (228 aa)) form the Radical SAM core domain. Positions 66, 70, and 73 each coordinate [4Fe-4S] cluster. Positions 110, 141, 201, and 273 each coordinate [2Fe-2S] cluster.

It belongs to the radical SAM superfamily. Biotin synthase family. Homodimer. The cofactor is [4Fe-4S] cluster. [2Fe-2S] cluster serves as cofactor.

It carries out the reaction (4R,5S)-dethiobiotin + (sulfur carrier)-SH + 2 reduced [2Fe-2S]-[ferredoxin] + 2 S-adenosyl-L-methionine = (sulfur carrier)-H + biotin + 2 5'-deoxyadenosine + 2 L-methionine + 2 oxidized [2Fe-2S]-[ferredoxin]. Its pathway is cofactor biosynthesis; biotin biosynthesis; biotin from 7,8-diaminononanoate: step 2/2. Functionally, catalyzes the conversion of dethiobiotin (DTB) to biotin by the insertion of a sulfur atom into dethiobiotin via a radical-based mechanism. This is Biotin synthase from Haemophilus influenzae (strain PittGG).